Consider the following 76-residue polypeptide: Protein RALF-like 26 (76 aa).

An N-terminal signal peptide occupies residues 1–22 (MKAWMIILLVICVAVVVEQSEA). C37 and C46 form a disulfide bridge. N61 carries N-linked (GlcNAc...) asparagine glycosylation. An intrachain disulfide couples C66 to C72.

It belongs to the plant rapid alkalinization factor (RALF) family.

The protein resides in the secreted. Cell signaling peptide that may regulate plant stress, growth, and development. Mediates a rapid alkalinization of extracellular space by mediating a transient increase in the cytoplasmic Ca(2+) concentration leading to a calcium-dependent signaling events through a cell surface receptor and a concomitant activation of some intracellular mitogen-activated protein kinases. The polypeptide is Protein RALF-like 26 (RALFL26) (Arabidopsis thaliana (Mouse-ear cress)).